An 838-amino-acid polypeptide reads, in one-letter code: Urease (838 aa).

The Urease domain maps to G400 to F838. 3 residues coordinate Ni(2+): H405, H407, and K488. At K488 the chain carries N6-carboxylysine. H490 serves as a coordination point for substrate. Residues H517 and H543 each contribute to the Ni(2+) site. Catalysis depends on H591, which acts as the Proton donor. A Ni(2+)-binding site is contributed by D631.

This sequence in the C-terminal section; belongs to the metallo-dependent hydrolases superfamily. Urease alpha subunit family. Homohexamer. Other oligomeric forms may exist depending on pH and presence of salts. It depends on Ni(2+) as a cofactor. Carboxylation allows a single lysine to coordinate two nickel ions.

It carries out the reaction urea + 2 H2O + H(+) = hydrogencarbonate + 2 NH4(+). It functions in the pathway nitrogen metabolism; urea degradation; CO(2) and NH(3) from urea (urease route): step 1/1. Its activity is regulated as follows. Requires the three urease accessory proteins URED, UREF AND UREG for its activation. Urea hydrolase involved in nitrogen recycling from ureide, purine, and arginine catabolism. This Arabidopsis thaliana (Mouse-ear cress) protein is Urease.